Consider the following 324-residue polypeptide: Beta-ketoacyl-[acyl-carrier-protein] synthase III (324 aa).

Catalysis depends on residues Cys114 and His251. The segment at 252–256 (QANLR) is ACP-binding. Residue Asn281 is part of the active site.

This sequence belongs to the thiolase-like superfamily. FabH family. Homodimer.

The protein localises to the cytoplasm. It catalyses the reaction malonyl-[ACP] + acetyl-CoA + H(+) = 3-oxobutanoyl-[ACP] + CO2 + CoA. The protein operates within lipid metabolism; fatty acid biosynthesis. In terms of biological role, catalyzes the condensation reaction of fatty acid synthesis by the addition to an acyl acceptor of two carbons from malonyl-ACP. Catalyzes the first condensation reaction which initiates fatty acid synthesis and may therefore play a role in governing the total rate of fatty acid production. Possesses both acetoacetyl-ACP synthase and acetyl transacylase activities. Its substrate specificity determines the biosynthesis of branched-chain and/or straight-chain of fatty acids. The polypeptide is Beta-ketoacyl-[acyl-carrier-protein] synthase III (Rhodobacter capsulatus (Rhodopseudomonas capsulata)).